Consider the following 336-residue polypeptide: Phospho-N-acetylmuramoyl-pentapeptide-transferase (336 aa).

10 helical membrane passes run 3-23 (LTLIAAIISFMVSAFTMPYFI), 53-73 (GGTVFLLVATAVSLLVSLFSI), 78-98 (SLALISGILSIVVIYGIIGFL), 118-138 (LALQLAGGLMFYFLHVSPSGI), 143-163 (VFGYQLSLGIFYLFFVLFWVV), 174-194 (GIDGLASISVVISLVTYGVIA), 200-220 (FDVLLLIGAMIGALLGFFCFN), 226-246 (VFMGDVGSLALGAMLAAISIA), 251-271 (WTLLIIGIVYVLETSSVMLQV), and 316-336 (AFLWGVGSLASLLVLAILYVF).

The protein belongs to the glycosyltransferase 4 family. MraY subfamily. The cofactor is Mg(2+).

It is found in the cell membrane. The enzyme catalyses UDP-N-acetyl-alpha-D-muramoyl-L-alanyl-gamma-D-glutamyl-L-lysyl-D-alanyl-D-alanine + di-trans,octa-cis-undecaprenyl phosphate = Mur2Ac(oyl-L-Ala-gamma-D-Glu-L-Lys-D-Ala-D-Ala)-di-trans,octa-cis-undecaprenyl diphosphate + UMP. The protein operates within cell wall biogenesis; peptidoglycan biosynthesis. Functionally, catalyzes the initial step of the lipid cycle reactions in the biosynthesis of the cell wall peptidoglycan: transfers peptidoglycan precursor phospho-MurNAc-pentapeptide from UDP-MurNAc-pentapeptide onto the lipid carrier undecaprenyl phosphate, yielding undecaprenyl-pyrophosphoryl-MurNAc-pentapeptide, known as lipid I. This is Phospho-N-acetylmuramoyl-pentapeptide-transferase from Streptococcus pyogenes serotype M3 (strain ATCC BAA-595 / MGAS315).